Here is a 109-residue protein sequence, read N- to C-terminus: MINYLWFVLAAFCEIAGCYAFYLWLRLGKSALWVLPGLLSLSLFALLLTRVEASYAGRAYAAYGGIYVAASLFWLAFVERSRPLWSDWLGVALCVLGASIVLFGPRLSQ.

Transmembrane regions (helical) follow at residues 5 to 25, 27 to 47, 59 to 79, and 84 to 104; these read LWFV…YLWL, LGKS…FALL, AYAA…AFVE, and LWSD…VLFG.

It belongs to the UPF0060 family.

It localises to the cell inner membrane. The sequence is that of UPF0060 membrane protein PSPA7_1846 from Pseudomonas paraeruginosa (strain DSM 24068 / PA7) (Pseudomonas aeruginosa (strain PA7)).